A 154-amino-acid polypeptide reads, in one-letter code: Putative protein heh-1 (154 aa).

The first 15 residues, 1–15 (MKTVIFLALLGLAAA), serve as a signal peptide directing secretion. Disulfide bonds link Cys39/Cys50 and Cys97/Cys103.

The protein belongs to the NPC2 family.

It localises to the secreted. The polypeptide is Putative protein heh-1 (heh-1) (Caenorhabditis elegans).